Consider the following 310-residue polypeptide: Formimidoylglutamase (310 aa).

Mn(2+)-binding residues include His-120, Asp-148, His-150, Asp-152, Asp-233, and Asp-235.

The protein belongs to the arginase family. Mn(2+) is required as a cofactor.

It catalyses the reaction N-formimidoyl-L-glutamate + H2O = formamide + L-glutamate. It functions in the pathway amino-acid degradation; L-histidine degradation into L-glutamate; L-glutamate from N-formimidoyl-L-glutamate (hydrolase route): step 1/1. Its function is as follows. Catalyzes the conversion of N-formimidoyl-L-glutamate to L-glutamate and formamide. This chain is Formimidoylglutamase, found in Nocardia farcinica (strain IFM 10152).